The primary structure comprises 246 residues: tRNA (guanine-N(1)-)-methyltransferase (246 aa).

Residues Gly117 and 137–142 contribute to the S-adenosyl-L-methionine site; that span reads IGDYVL.

The protein belongs to the RNA methyltransferase TrmD family. In terms of assembly, homodimer.

It is found in the cytoplasm. The catalysed reaction is guanosine(37) in tRNA + S-adenosyl-L-methionine = N(1)-methylguanosine(37) in tRNA + S-adenosyl-L-homocysteine + H(+). Functionally, specifically methylates guanosine-37 in various tRNAs. The sequence is that of tRNA (guanine-N(1)-)-methyltransferase from Acinetobacter baumannii (strain SDF).